The following is a 399-amino-acid chain: Phosphoglycerate kinase (399 aa).

Residues 22-24 (DFN), arginine 38, 61-64 (HLGR), arginine 120, and arginine 153 contribute to the substrate site. ATP-binding positions include lysine 204, glutamate 326, and 352-355 (GGDT).

It belongs to the phosphoglycerate kinase family. As to quaternary structure, monomer.

Its subcellular location is the cytoplasm. The catalysed reaction is (2R)-3-phosphoglycerate + ATP = (2R)-3-phospho-glyceroyl phosphate + ADP. It participates in carbohydrate degradation; glycolysis; pyruvate from D-glyceraldehyde 3-phosphate: step 2/5. This Geotalea uraniireducens (strain Rf4) (Geobacter uraniireducens) protein is Phosphoglycerate kinase.